We begin with the raw amino-acid sequence, 28 residues long: Dermaseptin-DI2 (28 aa).

In terms of tissue distribution, expressed by the skin glands.

The protein localises to the secreted. Its function is as follows. Has antibacterial activity against the Gram-positive bacteria S.aureus and E.faecalis, and the Gram-negative bacteria P.aeruginosa and E.coli. Has antiprotozoal activity against T.cruzi. Has antifungal activity against the yeasts C.tropicalis (MIC=10.9 uM), C.guilliermondii (MIC=21.8 uM), C.albicans (MIC=21.8 uM) and C.albicans ATCC 1023 (MIC=10.9 uM). Decreases viability of murine peritoneal cells. Fuses to, and disrupts liposomes. The chain is Dermaseptin-DI2 from Phyllomedusa distincta (Monkey frog).